Consider the following 137-residue polypeptide: ATP synthase epsilon chain, chloroplastic (137 aa).

The protein belongs to the ATPase epsilon chain family. In terms of assembly, F-type ATPases have 2 components, CF(1) - the catalytic core - and CF(0) - the membrane proton channel. CF(1) has five subunits: alpha(3), beta(3), gamma(1), delta(1), epsilon(1). CF(0) has three main subunits: a, b and c.

Its subcellular location is the plastid. The protein localises to the chloroplast thylakoid membrane. Functionally, produces ATP from ADP in the presence of a proton gradient across the membrane. This Pisum sativum (Garden pea) protein is ATP synthase epsilon chain, chloroplastic.